The sequence spans 397 residues: Iron-sulfur cluster assembly SufBD family protein Mb1497 (397 aa).

The protein belongs to the iron-sulfur cluster assembly SufBD family.

This chain is Iron-sulfur cluster assembly SufBD family protein Mb1497, found in Mycobacterium bovis (strain ATCC BAA-935 / AF2122/97).